Reading from the N-terminus, the 331-residue chain is Retinol dehydrogenase 13 (331 aa).

Position 2 is an N-acetylserine (Ser2). Residue 45-51 coordinates NADP(+); the sequence is GANTGIG. Ser174 serves as a coordination point for substrate. Tyr200 functions as the Proton acceptor in the catalytic mechanism. At Ser323 the chain carries Phosphoserine.

The protein belongs to the short-chain dehydrogenases/reductases (SDR) family. As to expression, widely expressed. In the retina, detected in the inner segment of the photoreceptor cells. Weak signals are observed in a small population of inner nuclear neurons and the inner plexiform layer.

The protein resides in the mitochondrion inner membrane. It carries out the reaction all-trans-retinol + NADP(+) = all-trans-retinal + NADPH + H(+). Its pathway is cofactor metabolism; retinol metabolism. Its function is as follows. Retinol dehydrogenase with a clear preference for NADP. Oxidizes all-trans-retinol, but seems to reduce all-trans-retinal with much higher efficiency. Has no activity toward steroids. The chain is Retinol dehydrogenase 13 (RDH13) from Homo sapiens (Human).